The sequence spans 103 residues: MYAVIKTGGQQFKVKQGTILKIEKLEIEPGKKVTFKEVLIVSDGDDIQVGTPFVSKVTVEAKIISQGKGKKVHILKFRRRKHSMKQQGHRQLLTEIEIVKINA.

This sequence belongs to the bacterial ribosomal protein bL21 family. In terms of assembly, part of the 50S ribosomal subunit. Contacts protein L20.

Functionally, this protein binds to 23S rRNA in the presence of protein L20. This is Large ribosomal subunit protein bL21 from Vesicomyosocius okutanii subsp. Calyptogena okutanii (strain HA).